The primary structure comprises 292 residues: Siderophore triacetylfusarinine C esterase (292 aa).

6 residues coordinate triacetylfusarinine C: Arg-97, Ser-148, Tyr-149, Ser-174, Trp-176, and His-267.

This sequence belongs to the esterase D family.

Its subcellular location is the cytoplasm. The catalysed reaction is triacetylfusarinine C + 3 H2O = 3 N-acetylfusarinine + Fe(3+). In terms of biological role, displays specific triacetylfusarinine C (TAFC) esterase activity but does not hydrolyze fusarinine C, which has the same core structure as TAFC. Hydrolysis optimizes but is not essential for TAFC-mediated iron uptake. Both extra- and intracellular siderophores have been shown to be crucial for the virulence. Subsequent to chelation of iron and uptake, FsC and TAFC are hydrolyzed and the iron is transferred to the metabolism or to the intracellular siderophore ferricrocin (FC) for transport and storage of iron. Hydrolyzes both TAFC and DF-TAFC with equal efficiencies, suggesting that its function might not be restricted to the release of iron from the siderophore but might also include the degradation of the iron-free chelator to protect cells. The polypeptide is Siderophore triacetylfusarinine C esterase (Aspergillus fumigatus (strain ATCC MYA-4609 / CBS 101355 / FGSC A1100 / Af293) (Neosartorya fumigata)).